A 430-amino-acid chain; its full sequence is Adenylosuccinate synthetase (430 aa).

GTP is bound by residues 12 to 18 (GDEGKGK) and 40 to 42 (GHT). The active-site Proton acceptor is Asp-13. Asp-13 and Gly-40 together coordinate Mg(2+). IMP is bound by residues 13–16 (DEGK), 38–41 (NAGH), Thr-130, Arg-144, Gln-224, Thr-239, and Arg-303. Catalysis depends on His-41, which acts as the Proton donor. Position 299 to 305 (299 to 305 (TVTSRKR)) interacts with substrate. Residues Arg-305, 331–333 (KLD), and 413–415 (STS) each bind GTP.

This sequence belongs to the adenylosuccinate synthetase family. In terms of assembly, homodimer. Requires Mg(2+) as cofactor.

The protein resides in the cytoplasm. It catalyses the reaction IMP + L-aspartate + GTP = N(6)-(1,2-dicarboxyethyl)-AMP + GDP + phosphate + 2 H(+). It functions in the pathway purine metabolism; AMP biosynthesis via de novo pathway; AMP from IMP: step 1/2. In terms of biological role, plays an important role in the de novo pathway of purine nucleotide biosynthesis. Catalyzes the first committed step in the biosynthesis of AMP from IMP. This is Adenylosuccinate synthetase from Pelagibacter ubique (strain HTCC1062).